Reading from the N-terminus, the 90-residue chain is UPF0335 protein Smed_2680 (90 aa).

Belongs to the UPF0335 family.

The protein is UPF0335 protein Smed_2680 of Sinorhizobium medicae (strain WSM419) (Ensifer medicae).